The primary structure comprises 201 residues: Probable nicotinate-nucleotide adenylyltransferase (201 aa).

Belongs to the NadD family.

It carries out the reaction nicotinate beta-D-ribonucleotide + ATP + H(+) = deamido-NAD(+) + diphosphate. The protein operates within cofactor biosynthesis; NAD(+) biosynthesis; deamido-NAD(+) from nicotinate D-ribonucleotide: step 1/1. In terms of biological role, catalyzes the reversible adenylation of nicotinate mononucleotide (NaMN) to nicotinic acid adenine dinucleotide (NaAD). The sequence is that of Probable nicotinate-nucleotide adenylyltransferase from Bacteroides fragilis (strain YCH46).